Consider the following 90-residue polypeptide: Large ribosomal subunit protein uL16c (90 aa).

Belongs to the universal ribosomal protein uL16 family. As to quaternary structure, part of the 50S ribosomal subunit.

It localises to the plastid. The protein resides in the chloroplast. The polypeptide is Large ribosomal subunit protein uL16c (rpl16) (Oenothera ammophila (Evening primerose)).